The chain runs to 131 residues: Global transcriptional regulator Spx (131 aa).

A disulfide bond links Cys10 and Cys13.

Belongs to the ArsC family. Spx subfamily. As to quaternary structure, interacts with the C-terminal domain of the alpha subunit of the RNAP.

It is found in the cytoplasm. Global transcriptional regulator that plays a key role in stress response and exerts either positive or negative regulation of genes. Acts by interacting with the C-terminal domain of the alpha subunit of the RNA polymerase (RNAP). This interaction can enhance binding of RNAP to the promoter region of target genes and stimulate their transcription, or block interaction of RNAP with activator. The polypeptide is Global transcriptional regulator Spx (Staphylococcus epidermidis (strain ATCC 35984 / DSM 28319 / BCRC 17069 / CCUG 31568 / BM 3577 / RP62A)).